The chain runs to 1117 residues: MAGLQQGCHFEGQNWTAPHWKTCLPCQGPWRLTVSHLKTVSSISVLSVVFWSVLLWADSLSLLAWARETFTLGVLGPWDCDPIFAQALPSIATQLAVDQVNQDASLLPGSQLDFKVLPTGCDTPHALATFVAHKNIVAAFVGPVNPGFCSAAALLAQGWGKSLFSWACEAPEGGGDLVPTLPSAADVLLSVMRHFGWARWAIVSSHQDIWVTTAQQLATAFRTHGLPIGLVTSLGPGEKGATEVCKQLHSVHGLKIVVLCMHSALLGGLEQTTLLHCAWEEGLTDGRLVFLPYDTLLFALPYGNRSYLVLDDHGPLQEAYDAVLTVSLESSPESHAFTATEMSGGATANLEPEQVSPLFGTIYDAVILLAHALNRSETHGAGLSGAHLGDHVRALDVAGFSQRIRTDGKGRRLAQYVILDTDGEGSQLVPTHILDTSTWQVQPLGKPIHFPGGSPPAHDASCWFDPNTLCIRGVQPLGSLLTLTIACVLALVGGFLAYFIRLGLQQLRLLRGPHRILLTSQELTFLQRTPSRRRPHVDSGSESRSVVDGGSPRSVTQGSARSLPAFLEHTNVALYQGEWVWLKKFEAGVAPDLRPSSLSFLRKLREMRHENVTAFLGLFVGPGVSAMVLEHCARGSLEDLLQNENLRLDWTFKASLLLDLIRGLRYLHHRRFPHGRLKSRNCVVDTRFVLKITDHGYAEFLESHCSSRPQPAPEELLWTAPELLRGPGKATFKGDVFSLAIILQEVLTRDPPYCSWGLSAEEIIRKVASPPPLCRPLVSPDQGPLECIQLMQLCWEEAPDDRPSLDQIYTQFKSINQGKKTSVVDSMLRMLEKYSESLEDLVQERTEELELERRKTERLLSQMLPPSVAHALKMGTTVEPEYFDQVTIYFSDIVGFTTISALSEPIEVVGFLNDLYTLFDAVLDSHDVYKVETIGDAYMVASGLPRRNGNRHAAEIANLALDILSYAGNFRMRHAPDVPIRVRAGLHSGPCVAGVVGLTMPRYCLFGDTVNTASRMESTGLPYRIHVSQSTVQALLSLDEGYKIDVRGQTELKGKGLEETYWLTGKVGFCRPLPTPLSIKPGDPWQDRINQEIRTGFAKARQGLAEPRKSGEAGPGP.

The first 66 residues, 1-66 (MAGLQQGCHF…ADSLSLLAWA (66 aa)), serve as a signal peptide directing secretion. Residues 67 to 479 (RETFTLGVLG…CIRGVQPLGS (413 aa)) are Extracellular-facing. A disulfide bridge links cysteine 121 with cysteine 149. Residues 480–500 (LLTLTIACVLALVGGFLAYFI) traverse the membrane as a helical segment. Residues 501–1117 (RLGLQQLRLL…RKSGEAGPGP (617 aa)) are Cytoplasmic-facing. Residues 529-557 (TPSRRRPHVDSGSESRSVVDGGSPRSVTQ) form a disordered region. The 272-residue stretch at 541-812 (SESRSVVDGG…PSLDQIYTQF (272 aa)) folds into the Protein kinase domain. The segment at 874–915 (MGTTVEPEYFDQVTIYFSDIVGFTTISALSEPIEVVGFLNDL) is interaction with NCALD. In terms of domain architecture, Guanylate cyclase spans 887–1017 (TIYFSDIVGF…DTVNTASRME (131 aa)). The segment at 1096–1117 (GFAKARQGLAEPRKSGEAGPGP) is disordered.

This sequence belongs to the adenylyl cyclase class-4/guanylyl cyclase family. In terms of assembly, interacts (via the catalytic domain) with NCALD. Found in a subset of olfactory neurons in the main olfactory epithelium.

Its subcellular location is the cell projection. The protein resides in the cilium membrane. The enzyme catalyses GTP = 3',5'-cyclic GMP + diphosphate. With respect to regulation, activated by Ca(2+). In terms of biological role, functions as an olfactory receptor activated by urine odorants, uroguanylin and guanylin and as well by the volatile semiochemicals carbon disulfide (CS2) and carbon dioxide (CO2). Has guanylate cyclase activity upon binding of the ligand. Activation of GUCY2D neurons leads to the cGMP-dependent activation of the CNGA3 channels, membrane depolarization and an increase in action potential frequency. Signaling pathways activated by GUCY2D may trigger social behaviors such as acquisition of food preference. This Mus musculus (Mouse) protein is Guanylate cyclase D.